The following is a 188-amino-acid chain: HGPRTase-like protein 1 (188 aa).

It belongs to the purine/pyrimidine phosphoribosyltransferase family. Archaeal HPRT subfamily.

Its function is as follows. May catalyze a purine salvage reaction, the substrate is unknown. This chain is HGPRTase-like protein 1, found in Haloquadratum walsbyi (strain DSM 16854 / JCM 12705 / C23).